We begin with the raw amino-acid sequence, 551 residues long: Cytochrome P450 monooxygenase FCK2 (551 aa).

The next 3 helical transmembrane spans lie at 8 to 28 (FDPA…VFIF), 35 to 55 (LHVF…VYIV), and 69 to 89 (VTTI…ISIL). Asparagine 258 is a glycosylation site (N-linked (GlcNAc...) asparagine). A heme-binding site is contributed by cysteine 493.

Belongs to the cytochrome P450 family. The cofactor is heme.

The protein localises to the membrane. Its pathway is secondary metabolite biosynthesis. In terms of biological role, cytochrome P450 monooxygenase; part of the gene cluster that mediates the biosynthesis of cytokinins such as fusatin, fusatinic acids or 8-oxofusatin, known for their growth promoting and anti-senescence activities toward host plants. FCK1 is a bifunctional enzyme that performs the first steps in the biosynthesis of Fusarium cytokinins. It first condenses adenosine monophosphate (AMP) with dimethylallyl diphosphate (DMAPP) to yield isoprenyl adenosine monophosphate. It then catalyzes the removal of the phosphoribose to produce isopentenylaldehyde. The cytochrome P450 monooxygenase then converts isopentenylaldehyde to trans-zeatin. A condensation step converts trans-zeatin to fusatin which is further modified to produce fusatinic acid. The mechanism for oxidation of fusatin to fusatinic acid remains unknown. 8-oxofusatin could be produced through several pathways, via direct oxygenation of fusatin, or via the 8-oxo-pentenyladenine intermediate which itself must arise from either the prenylation of 8-oxo-AMP by FCK1 and/or oxygenation of isopentenylaldehyde. Both the FCK3 and FCK4 enzymes act downstream of the identified cytokinins to produce yet unidentified compounds. This chain is Cytochrome P450 monooxygenase FCK2, found in Fusarium pseudograminearum (strain CS3096) (Wheat and barley crown-rot fungus).